The primary structure comprises 459 residues: UDP-N-acetylmuramoylalanine--D-glutamate ligase (459 aa).

120-126 (GSNGKTT) provides a ligand contact to ATP.

Belongs to the MurCDEF family.

It localises to the cytoplasm. The catalysed reaction is UDP-N-acetyl-alpha-D-muramoyl-L-alanine + D-glutamate + ATP = UDP-N-acetyl-alpha-D-muramoyl-L-alanyl-D-glutamate + ADP + phosphate + H(+). It participates in cell wall biogenesis; peptidoglycan biosynthesis. In terms of biological role, cell wall formation. Catalyzes the addition of glutamate to the nucleotide precursor UDP-N-acetylmuramoyl-L-alanine (UMA). This is UDP-N-acetylmuramoylalanine--D-glutamate ligase from Lactobacillus acidophilus (strain ATCC 700396 / NCK56 / N2 / NCFM).